The primary structure comprises 133 residues: UPF0102 protein Anae109_1947 (133 aa).

This sequence belongs to the UPF0102 family.

This is UPF0102 protein Anae109_1947 from Anaeromyxobacter sp. (strain Fw109-5).